The chain runs to 122 residues: Small ribosomal subunit protein uS13 (122 aa).

Residues 97–114 show a composition bias toward basic residues; that stretch reads PVRGQRTHTNAKTRKGKS. Positions 97–122 are disordered; it reads PVRGQRTHTNAKTRKGKSRLPIAGKE.

The protein belongs to the universal ribosomal protein uS13 family. In terms of assembly, part of the 30S ribosomal subunit. Forms a loose heterodimer with protein S19. Forms two bridges to the 50S subunit in the 70S ribosome.

In terms of biological role, located at the top of the head of the 30S subunit, it contacts several helices of the 16S rRNA. In the 70S ribosome it contacts the 23S rRNA (bridge B1a) and protein L5 of the 50S subunit (bridge B1b), connecting the 2 subunits; these bridges are implicated in subunit movement. Contacts the tRNAs in the A and P-sites. The chain is Small ribosomal subunit protein uS13 from Wolbachia sp. subsp. Brugia malayi (strain TRS).